The primary structure comprises 371 residues: Cytochrome b (371 aa).

4 helical membrane-spanning segments follow: residues 25-45 (FGSM…FLAV), 69-90 (WMVQ…YIHI), 105-125 (WLSG…GYVL), and 170-190 (FFAL…LHVL). Heme b contacts are provided by His-75 and His-89. Heme b contacts are provided by His-174 and His-188. His-193 contributes to the a ubiquinone binding site. 4 helical membrane passes run 218–238 (MKDL…ISFF), 280–300 (LGGA…PFIH), 312–332 (LMQL…WAAT), and 339–358 (FISI…ISNP).

It belongs to the cytochrome b family. In terms of assembly, the cytochrome bc1 complex contains 3 respiratory subunits (MT-CYB, CYC1 and UQCRFS1), 2 core proteins (UQCRC1 and UQCRC2) and probably 6 low-molecular weight proteins. The cofactor is heme b.

Its subcellular location is the mitochondrion inner membrane. Functionally, component of the ubiquinol-cytochrome c reductase complex (complex III or cytochrome b-c1 complex) that is part of the mitochondrial respiratory chain. The b-c1 complex mediates electron transfer from ubiquinol to cytochrome c. Contributes to the generation of a proton gradient across the mitochondrial membrane that is then used for ATP synthesis. The sequence is that of Cytochrome b (MT-CYB) from Boa constrictor (Boa).